We begin with the raw amino-acid sequence, 262 residues long: Imidazole glycerol phosphate synthase subunit HisF (262 aa).

Residues Asp11 and Asp130 contribute to the active site.

Belongs to the HisA/HisF family. In terms of assembly, heterodimer of HisH and HisF.

Its subcellular location is the cytoplasm. It catalyses the reaction 5-[(5-phospho-1-deoxy-D-ribulos-1-ylimino)methylamino]-1-(5-phospho-beta-D-ribosyl)imidazole-4-carboxamide + L-glutamine = D-erythro-1-(imidazol-4-yl)glycerol 3-phosphate + 5-amino-1-(5-phospho-beta-D-ribosyl)imidazole-4-carboxamide + L-glutamate + H(+). The protein operates within amino-acid biosynthesis; L-histidine biosynthesis; L-histidine from 5-phospho-alpha-D-ribose 1-diphosphate: step 5/9. In terms of biological role, IGPS catalyzes the conversion of PRFAR and glutamine to IGP, AICAR and glutamate. The HisF subunit catalyzes the cyclization activity that produces IGP and AICAR from PRFAR using the ammonia provided by the HisH subunit. The chain is Imidazole glycerol phosphate synthase subunit HisF from Rhodopirellula baltica (strain DSM 10527 / NCIMB 13988 / SH1).